The chain runs to 257 residues: Uridylate kinase (257 aa).

8-11 (KLSG) contributes to the ATP binding site. The involved in allosteric activation by GTP stretch occupies residues 21–26 (GSAGFG). Residue G56 participates in UMP binding. The ATP site is built by G57 and R61. UMP is bound by residues D75 and 136–143 (NGAPFFTT). ATP-binding residues include N164, Y170, and D173.

This sequence belongs to the UMP kinase family. As to quaternary structure, homohexamer.

It is found in the cytoplasm. It carries out the reaction UMP + ATP = UDP + ADP. It functions in the pathway pyrimidine metabolism; CTP biosynthesis via de novo pathway; UDP from UMP (UMPK route): step 1/1. Its activity is regulated as follows. Allosterically activated by GTP. Inhibited by UTP. Its function is as follows. Catalyzes the reversible phosphorylation of UMP to UDP. This is Uridylate kinase from Deinococcus geothermalis (strain DSM 11300 / CIP 105573 / AG-3a).